Consider the following 229-residue polypeptide: Potassium/proton antiporter CemA (229 aa).

The next 3 membrane-spanning stretches (helical) occupy residues L7–F27, I106–L126, and I189–I209.

This sequence belongs to the CemA family.

It is found in the plastid. The protein localises to the chloroplast inner membrane. The enzyme catalyses K(+)(in) + H(+)(out) = K(+)(out) + H(+)(in). In terms of biological role, contributes to K(+)/H(+) antiport activity by supporting proton efflux to control proton extrusion and homeostasis in chloroplasts in a light-dependent manner to modulate photosynthesis. Prevents excessive induction of non-photochemical quenching (NPQ) under continuous-light conditions. Indirectly promotes efficient inorganic carbon uptake into chloroplasts. This chain is Potassium/proton antiporter CemA, found in Liriodendron tulipifera (Tuliptree).